The primary structure comprises 669 residues: DNA mismatch repair protein MutL (669 aa).

The segment at 343–408 (SAFHRAEPEE…RAPSDSSVRE (66 aa)) is disordered. Residues 344–356 (AFHRAEPEERESQ) show a composition bias toward basic and acidic residues. Positions 357 to 372 (PETTPQYSPQSVSTTV) are enriched in polar residues. The segment covering 390–408 (TDYEIKPRDRAPSDSSVRE) has biased composition (basic and acidic residues).

This sequence belongs to the DNA mismatch repair MutL/HexB family.

In terms of biological role, this protein is involved in the repair of mismatches in DNA. It is required for dam-dependent methyl-directed DNA mismatch repair. May act as a 'molecular matchmaker', a protein that promotes the formation of a stable complex between two or more DNA-binding proteins in an ATP-dependent manner without itself being part of a final effector complex. In Vibrio parahaemolyticus serotype O3:K6 (strain RIMD 2210633), this protein is DNA mismatch repair protein MutL.